Consider the following 106-residue polypeptide: Small ribosomal subunit protein bS20 (106 aa).

The span at 1 to 20 (MATAKPKKKNPRLASGRKRV) shows a compositional bias: basic residues. Residues 1–21 (MATAKPKKKNPRLASGRKRVR) form a disordered region.

It belongs to the bacterial ribosomal protein bS20 family.

Binds directly to 16S ribosomal RNA. This is Small ribosomal subunit protein bS20 from Polaromonas naphthalenivorans (strain CJ2).